The chain runs to 149 residues: UPF0306 protein PM1958 (149 aa).

Belongs to the UPF0306 family.

The polypeptide is UPF0306 protein PM1958 (Pasteurella multocida (strain Pm70)).